The primary structure comprises 285 residues: N-alpha-acetyltransferase 40 (285 aa).

Positions 88–274 (INYKLHKSRG…GGGRVVVPCD (187 aa)) constitute an N-acetyltransferase domain. Substrate contacts are provided by residues Tyr-116, 163–165 (TEE), and Tyr-185. Residues 187-189 (VHV) and 195-200 (GHGIGR) contribute to the acetyl-CoA site. Residue Thr-228 coordinates substrate. Asn-233 contributes to the acetyl-CoA binding site.

It belongs to the acetyltransferase family. NAA40 subfamily.

The protein resides in the nucleus. The protein localises to the cytoplasm. It catalyses the reaction N-terminal L-seryl-[histone H4] + acetyl-CoA = N-terminal N(alpha)-acetyl-L-seryl-[histone H4] + CoA + H(+). The enzyme catalyses N-terminal L-seryl-[histone H2A] + acetyl-CoA = N-terminal N(alpha)-acetyl-L-seryl-[histone H2A] + CoA + H(+). Its function is as follows. N-alpha-acetyltransferase that specifically mediates the acetylation of the N-terminal residues of histones H4 and H2A. This is N-alpha-acetyltransferase 40 from Saccharomyces cerevisiae (strain ATCC 204508 / S288c) (Baker's yeast).